Consider the following 248-residue polypeptide: UPF0246 protein RAF_ORF0648 (248 aa).

This sequence belongs to the UPF0246 family.

In Rickettsia africae (strain ESF-5), this protein is UPF0246 protein RAF_ORF0648.